The sequence spans 440 residues: Adenylosuccinate synthetase (440 aa).

GTP is bound by residues Gly14–Lys20 and Gly42–Thr44. Asp15 acts as the Proton acceptor in catalysis. Asp15 and Gly42 together coordinate Mg(2+). IMP is bound by residues Asp15–Lys18, Asn40–His43, Thr131, Arg145, Gln226, Thr241, and Arg313. The Proton donor role is filled by His43. Ala309–Arg315 lines the substrate pocket. GTP is bound by residues Arg315, Lys341–Asp343, and Ser423–Gly425.

Belongs to the adenylosuccinate synthetase family. Homodimer. Requires Mg(2+) as cofactor.

It localises to the cytoplasm. It carries out the reaction IMP + L-aspartate + GTP = N(6)-(1,2-dicarboxyethyl)-AMP + GDP + phosphate + 2 H(+). It participates in purine metabolism; AMP biosynthesis via de novo pathway; AMP from IMP: step 1/2. In terms of biological role, plays an important role in the de novo pathway of purine nucleotide biosynthesis. Catalyzes the first committed step in the biosynthesis of AMP from IMP. The sequence is that of Adenylosuccinate synthetase from Hydrogenovibrio crunogenus (strain DSM 25203 / XCL-2) (Thiomicrospira crunogena).